The following is a 386-amino-acid chain: O-phospho-L-seryl-tRNA:Cys-tRNA synthase (386 aa).

Pyridoxal 5'-phosphate is bound by residues 89–90 (AR), asparagine 196, and 219–221 (SGH). Lysine 222 bears the N6-(pyridoxal phosphate)lysine mark.

It belongs to the SepCysS family. As to quaternary structure, homodimer. Interacts with SepRS. Requires pyridoxal 5'-phosphate as cofactor.

It carries out the reaction O-phospho-L-seryl-tRNA(Cys) + hydrogen sulfide + H(+) = L-cysteinyl-tRNA(Cys) + phosphate. Functionally, converts O-phospho-L-seryl-tRNA(Cys) (Sep-tRNA(Cys)) to L-cysteinyl-tRNA(Cys) (Cys-tRNA(Cys)). The sequence is that of O-phospho-L-seryl-tRNA:Cys-tRNA synthase from Methanosarcina mazei (strain ATCC BAA-159 / DSM 3647 / Goe1 / Go1 / JCM 11833 / OCM 88) (Methanosarcina frisia).